The primary structure comprises 1280 residues: Multidrug resistance protein 1 (1280 aa).

Residues 1-72 are Cytoplasmic-facing; that stretch reads MSRAHAAYAN…YADATDRVLM (72 aa). Residues 72–357 enclose the ABC transmembrane type-1 1 domain; that stretch reads MIAGTAFAVA…VAPSRTAFTE (286 aa). 6 helical membrane passes run 73 to 93, 120 to 140, 189 to 209, 216 to 236, 297 to 317, and 326 to 345; these read IAGTAFAVACGAGMPVFSFIF, YVGIAMLIACAGHVMCWTVAA, KLSQGIMNGSMGVIGYIAGFV, LMMIGMMPFIIVMAAIIGSIV, LSAAVIMALMYVSYTVAFFFG, and RDMADIISTFLAVLMGSFGL. Residues 346 to 712 lie on the Cytoplasmic side of the membrane; the sequence is GFVAPSRTAF…MRMNKDKAWA (367 aa). In terms of domain architecture, ABC transporter 1 spans 391–634; the sequence is IEFRNVRFAY…DGEFAAVAKM (244 aa). 426-433 serves as a coordination point for ATP; it reads GASGCGKS. Transmembrane regions (helical) follow at residues 713–733, 762–781, 837–857, 858–878, 938–958, and 976–996; these read VALGILSSVVIGSARPASSIV, PLFIVFAVANFSGWILHGFY, IGLKVQTMCIIASGLVVGFIY, QWKLALVALACMPLMIGCSLT, IIAGGIYGITQFIFYGVYALC, and VMIASMSILFGAQNAGEAGAF. An ABC transmembrane type-1 2 domain is found at 713–1002; that stretch reads VALGILSSVV…AGAFATKLAD (290 aa). In terms of domain architecture, ABC transporter 2 spans 1036-1274; that stretch reads IEYRNVQFIY…GGEYKTRYDL (239 aa). 1071–1078 lines the ATP pocket; sequence GQTGCGKS. N-linked (GlcNAc...) asparagine glycosylation is present at N1113.

This sequence belongs to the ABC transporter superfamily. ABCB family. Multidrug resistance exporter (TC 3.A.1.201) subfamily.

Its subcellular location is the membrane. It catalyses the reaction ATP + H2O + xenobioticSide 1 = ADP + phosphate + xenobioticSide 2.. Its function is as follows. Energy-dependent efflux pump responsible for decreased drug accumulation in multi-drug-resistant cells. Confers vinblastine resistance. The chain is Multidrug resistance protein 1 (MDR1) from Leishmania enriettii.